The primary structure comprises 373 residues: Peroxisomal biogenesis factor 3 (373 aa).

Residues Met1–Lys15 are Cytoplasmic-facing. The segment at Met1 to Ala45 is targeting to peroxisomes. Residues Cys16–Lys36 traverse the membrane as a helical segment. Topologically, residues Ile37–Ile116 are peroxisomal. Residues Val117–Ile140 traverse the membrane as a helical segment. The tract at residues Tyr120 to Ile136 is interaction with PEX19. Residues Tyr141–Lys373 lie on the Cytoplasmic side of the membrane.

Belongs to the peroxin-3 family. As to quaternary structure, interacts with PEX19.

It is found in the peroxisome membrane. Its function is as follows. Involved in peroxisome biosynthesis and integrity. Assembles membrane vesicles before the matrix proteins are translocated. As a docking factor for PEX19, is necessary for the import of peroxisomal membrane proteins in the peroxisomes. This chain is Peroxisomal biogenesis factor 3 (PEX3), found in Cricetulus longicaudatus (Long-tailed dwarf hamster).